A 296-amino-acid polypeptide reads, in one-letter code: Putative methyltransferase HI_1523 (296 aa).

Belongs to the N(4)/N(6)-methyltransferase family.

The sequence is that of Putative methyltransferase HI_1523 from Haemophilus influenzae (strain ATCC 51907 / DSM 11121 / KW20 / Rd).